Reading from the N-terminus, the 957-residue chain is Kinesin heavy chain isoform 5C (957 aa).

In terms of domain architecture, Kinesin motor spans 8–327 (SIKVMCRFRP…LMFGQRAKTI (320 aa)). Residues glutamine 87, serine 89, serine 90, glycine 91, lysine 92, threonine 93, histidine 94, and lysine 99 each coordinate ATP. The tract at residues 174-315 (VSSPEEVMDV…PSVFNEAETK (142 aa)) is microtubule-binding. Positions 406–923 (VAGISTEEKE…ARRAHSAQIA (518 aa)) form a coiled coil. The segment at 859–956 (RCELPKLEKR…GSSSNSTHYQ (98 aa)) is globular. The disordered stretch occupies residues 911-957 (KNMARRAHSAQIAKPIRPGHYPASSPTAVHAIRGGGGSSSNSTHYQK).

It belongs to the TRAFAC class myosin-kinesin ATPase superfamily. Kinesin family. Kinesin subfamily. In terms of assembly, oligomer composed of two heavy chains and two light chains. Interacts with GRIP1 and KLC3. Interacts with TRAK1. Interacts with ZFYVE27. As to expression, highest expression in brain, prostate and testis, and moderate expression in kidney, small intestine and ovary.

The protein localises to the cytoplasm. It is found in the cytoskeleton. It localises to the cell projection. The protein resides in the dendrite. The enzyme catalyses ATP + H2O = ADP + phosphate + H(+). Microtubule-associated force-producing protein that may play a role in organelle transport. Has ATPase activity. Involved in synaptic transmission. Mediates dendritic trafficking of mRNAs. Required for anterograde axonal transportation of MAPK8IP3/JIP3 which is essential for MAPK8IP3/JIP3 function in axon elongation. In Homo sapiens (Human), this protein is Kinesin heavy chain isoform 5C (KIF5C).